Reading from the N-terminus, the 200-residue chain is Pyridoxine/pyridoxamine 5'-phosphate oxidase (200 aa).

Residues 48–53, 63–64, K70, and Q92 contribute to the FMN site; these read RMVLLK and YT. K53 is a binding site for substrate. Substrate-binding residues include Y110, R114, and S118. Residues 127 to 128 and W171 contribute to the FMN site; that span reads QS. 177–179 lines the substrate pocket; that stretch reads RLH. R181 is a binding site for FMN.

Belongs to the pyridoxamine 5'-phosphate oxidase family. Homodimer. Requires FMN as cofactor.

The catalysed reaction is pyridoxamine 5'-phosphate + O2 + H2O = pyridoxal 5'-phosphate + H2O2 + NH4(+). The enzyme catalyses pyridoxine 5'-phosphate + O2 = pyridoxal 5'-phosphate + H2O2. It participates in cofactor metabolism; pyridoxal 5'-phosphate salvage; pyridoxal 5'-phosphate from pyridoxamine 5'-phosphate: step 1/1. The protein operates within cofactor metabolism; pyridoxal 5'-phosphate salvage; pyridoxal 5'-phosphate from pyridoxine 5'-phosphate: step 1/1. Functionally, catalyzes the oxidation of either pyridoxine 5'-phosphate (PNP) or pyridoxamine 5'-phosphate (PMP) into pyridoxal 5'-phosphate (PLP). This Cereibacter sphaeroides (strain ATCC 17029 / ATH 2.4.9) (Rhodobacter sphaeroides) protein is Pyridoxine/pyridoxamine 5'-phosphate oxidase.